Here is a 62-residue protein sequence, read N- to C-terminus: Photosystem II reaction center protein Z (62 aa).

2 helical membrane-spanning segments follow: residues 8–28 (AVFA…LVFA) and 41–61 (FSGT…NSLI).

It belongs to the PsbZ family. PSII is composed of 1 copy each of membrane proteins PsbA, PsbB, PsbC, PsbD, PsbE, PsbF, PsbH, PsbI, PsbJ, PsbK, PsbL, PsbM, PsbT, PsbY, PsbZ, Psb30/Ycf12, at least 3 peripheral proteins of the oxygen-evolving complex and a large number of cofactors. It forms dimeric complexes.

The protein resides in the plastid. Its subcellular location is the chloroplast thylakoid membrane. May control the interaction of photosystem II (PSII) cores with the light-harvesting antenna, regulates electron flow through the 2 photosystem reaction centers. PSII is a light-driven water plastoquinone oxidoreductase, using light energy to abstract electrons from H(2)O, generating a proton gradient subsequently used for ATP formation. The protein is Photosystem II reaction center protein Z of Oryza nivara (Indian wild rice).